The chain runs to 79 residues: Putative membrane protein insertion efficiency factor (79 aa).

It belongs to the UPF0161 family.

It localises to the cell inner membrane. Could be involved in insertion of integral membrane proteins into the membrane. This is Putative membrane protein insertion efficiency factor from Cytophaga hutchinsonii (strain ATCC 33406 / DSM 1761 / CIP 103989 / NBRC 15051 / NCIMB 9469 / D465).